The sequence spans 510 residues: NAD(P)H-quinone oxidoreductase subunit 2 B, chloroplastic (510 aa).

13 helical membrane passes run 26-46, 57-77, 99-119, 124-144, 149-169, 183-203, 227-247, 295-315, 323-342, 354-374, 395-415, 418-438, and 484-504; these read LFDG…ILLL, IPWF…ALLF, IFQF…VEYI, MAIT…MFLC, LITI…LSGY, YLLM…WLYG, PGIS…LSPA, WHPL…LIAI, MLAY…IIVG, YMLF…LFGL, ALSL…AGFF, LHLF…IGLF, and MIVC…IIAI.

It belongs to the complex I subunit 2 family. As to quaternary structure, NDH is composed of at least 16 different subunits, 5 of which are encoded in the nucleus.

Its subcellular location is the plastid. It is found in the chloroplast thylakoid membrane. The enzyme catalyses a plastoquinone + NADH + (n+1) H(+)(in) = a plastoquinol + NAD(+) + n H(+)(out). It carries out the reaction a plastoquinone + NADPH + (n+1) H(+)(in) = a plastoquinol + NADP(+) + n H(+)(out). In terms of biological role, NDH shuttles electrons from NAD(P)H:plastoquinone, via FMN and iron-sulfur (Fe-S) centers, to quinones in the photosynthetic chain and possibly in a chloroplast respiratory chain. The immediate electron acceptor for the enzyme in this species is believed to be plastoquinone. Couples the redox reaction to proton translocation, and thus conserves the redox energy in a proton gradient. This chain is NAD(P)H-quinone oxidoreductase subunit 2 B, chloroplastic, found in Oenothera argillicola (Appalachian evening primrose).